A 200-amino-acid polypeptide reads, in one-letter code: MNEALRDLAGYIKEKLDGRVQDWMVAYDELTIFVEPGDIVDVLTFLKSDVQCQFFAFVDISGVDYPARERRFEVVYHLLSPRQNQRIRVKVSTDEETPIPSVIEVFPAANWYEREIYDLYGVLFTEHPDLRRILTDYGFEGHPLRKDFPLTGFVEVHYDDEAKRVVYQPVNLRQEFRNFDFLSPWEGTDYVLPGDEKAKQ.

This sequence belongs to the complex I 30 kDa subunit family. In terms of assembly, NDH-1 is composed of 14 different subunits. Subunits NuoB, C, D, E, F, and G constitute the peripheral sector of the complex.

The protein localises to the cell inner membrane. It carries out the reaction a quinone + NADH + 5 H(+)(in) = a quinol + NAD(+) + 4 H(+)(out). NDH-1 shuttles electrons from NADH, via FMN and iron-sulfur (Fe-S) centers, to quinones in the respiratory chain. The immediate electron acceptor for the enzyme in this species is believed to be ubiquinone. Couples the redox reaction to proton translocation (for every two electrons transferred, four hydrogen ions are translocated across the cytoplasmic membrane), and thus conserves the redox energy in a proton gradient. The protein is NADH-quinone oxidoreductase subunit C of Chelativorans sp. (strain BNC1).